The following is a 601-amino-acid chain: 3-hydroxy-3-methylglutaryl-coenzyme A reductase (601 aa).

A disordered region spans residues 1 to 34; the sequence is MDSRRRSPTVTAKAAAGELPLAPHEGQNQQPSIP. The next 2 membrane-spanning stretches (helical) occupy residues 36–58 and 86–106; these read SSDV…FFSV and ALAS…LDFV. The segment at 107–179 is linker; that stretch reads QSLIYKPNNE…PLITPQNSEE (73 aa). The segment at 180-601 is catalytic; the sequence is DEDIIKAVVA…IASSQLESDS (422 aa). Glu273 functions as the Charge relay system in the catalytic mechanism. An N-linked (GlcNAc...) asparagine glycan is attached at Asn337. Active-site charge relay system residues include Lys405 and Asp481. His579 acts as the Proton donor in catalysis. Asn583 carries an N-linked (GlcNAc...) asparagine glycan.

It belongs to the HMG-CoA reductase family.

The protein resides in the endoplasmic reticulum membrane. It carries out the reaction (R)-mevalonate + 2 NADP(+) + CoA = (3S)-3-hydroxy-3-methylglutaryl-CoA + 2 NADPH + 2 H(+). The protein operates within metabolic intermediate biosynthesis; (R)-mevalonate biosynthesis; (R)-mevalonate from acetyl-CoA: step 3/3. In terms of biological role, catalyzes the synthesis of mevalonate. The specific precursor of all isoprenoid compounds present in plants. This Catharanthus roseus (Madagascar periwinkle) protein is 3-hydroxy-3-methylglutaryl-coenzyme A reductase (HMGR).